Here is a 113-residue protein sequence, read N- to C-terminus: Putative pterin-4-alpha-carbinolamine dehydratase (113 aa).

This sequence belongs to the pterin-4-alpha-carbinolamine dehydratase family.

It carries out the reaction (4aS,6R)-4a-hydroxy-L-erythro-5,6,7,8-tetrahydrobiopterin = (6R)-L-erythro-6,7-dihydrobiopterin + H2O. The chain is Putative pterin-4-alpha-carbinolamine dehydratase from Idiomarina loihiensis (strain ATCC BAA-735 / DSM 15497 / L2-TR).